An 82-amino-acid chain; its full sequence is Short neurotoxin OKI-10 (82 aa).

An N-terminal signal peptide occupies residues 1-20 (KTLLLTLVVVTIVCLDLGYT). Cystine bridges form between C23–C44, C37–C61, C63–C74, and C75–C80.

This sequence belongs to the three-finger toxin family. Short-chain subfamily. Type I alpha-neurotoxin sub-subfamily. Expressed by the venom gland.

Its subcellular location is the secreted. Functionally, binds to muscle nicotinic acetylcholine receptor (nAChR) and inhibit acetylcholine from binding to the receptor, thereby impairing neuromuscular transmission. The polypeptide is Short neurotoxin OKI-10 (Laticauda laticaudata (Blue-ringed sea krait)).